A 309-amino-acid polypeptide reads, in one-letter code: RuBisCO operon transcriptional regulator (309 aa).

One can recognise an HTH lysR-type domain in the interval alanine 6–threonine 63. Residues phenylalanine 23–arginine 42 constitute a DNA-binding region (H-T-H motif).

It belongs to the LysR transcriptional regulatory family.

Its function is as follows. Trans-acting transcriptional regulator of RuBisCO genes (rbcL1S1) expression. The protein is RuBisCO operon transcriptional regulator (rbcR) of Acidithiobacillus ferrooxidans (Thiobacillus ferrooxidans).